A 453-amino-acid polypeptide reads, in one-letter code: MTTDTIVAQATAPGRGGVGIIRISGDKASDVAMAVLGHLPKTRYADYCDFKDAENAVIDQGIALYFQGPNSFTGEDVLELQGHGGQIVLDMLIKRVMEVDGVRIAKPGEFSEQAFMNDKMDLTQAEAIADLIDATSEQAAKSALNSLQGEFSVQIHELVEQVTNLRLYVEAAIDFPDEEVDFLSDGKIAGSLNRIITKLDSVQASAKQGAIIREGMKVVIAGRPNAGKSSLLNALAGKESAIVTEIAGTTRDVLREHIHLDGMPLHIIDTAGLRDTDDTVEMIGIERAWAEIETADQVLFMVDGTTTDAVDPREIWPDFIDRLPKNLGITVVRNKADITGEPLTVTQDHGHSVFKISAKTGLGVESLQQHLKSLMGYQSNLEGGFIARRRHLEALDLASSHLMIGKEQLEVYLAGELLAEELRMTQMALSEITGKFTSDDLLGKIFSSFCIGK.

(6S)-5-formyl-5,6,7,8-tetrahydrofolate-binding residues include Arg-22, Glu-79, and Lys-119. The region spanning 215-376 (GMKVVIAGRP…LQQHLKSLMG (162 aa)) is the TrmE-type G domain. Residue Asn-225 coordinates K(+). GTP-binding positions include 225 to 230 (NAGKSS), 244 to 250 (TEIAGTT), 269 to 272 (DTAG), and 334 to 337 (NKAD). Position 229 (Ser-229) interacts with Mg(2+). K(+) contacts are provided by Thr-244, Ile-246, and Thr-249. A Mg(2+)-binding site is contributed by Thr-250. Lys-453 is a binding site for (6S)-5-formyl-5,6,7,8-tetrahydrofolate.

It belongs to the TRAFAC class TrmE-Era-EngA-EngB-Septin-like GTPase superfamily. TrmE GTPase family. Homodimer. Heterotetramer of two MnmE and two MnmG subunits. K(+) is required as a cofactor.

Its subcellular location is the cytoplasm. Its function is as follows. Exhibits a very high intrinsic GTPase hydrolysis rate. Involved in the addition of a carboxymethylaminomethyl (cmnm) group at the wobble position (U34) of certain tRNAs, forming tRNA-cmnm(5)s(2)U34. This Shewanella woodyi (strain ATCC 51908 / MS32) protein is tRNA modification GTPase MnmE.